The following is a 166-amino-acid chain: Large ribosomal subunit protein uL10 (166 aa).

The protein belongs to the universal ribosomal protein uL10 family. In terms of assembly, part of the ribosomal stalk of the 50S ribosomal subunit. The N-terminus interacts with L11 and the large rRNA to form the base of the stalk. The C-terminus forms an elongated spine to which L12 dimers bind in a sequential fashion forming a multimeric L10(L12)X complex.

Its function is as follows. Forms part of the ribosomal stalk, playing a central role in the interaction of the ribosome with GTP-bound translation factors. The polypeptide is Large ribosomal subunit protein uL10 (Pseudomonas syringae pv. tomato (strain ATCC BAA-871 / DC3000)).